A 174-amino-acid polypeptide reads, in one-letter code: Variant surface antigen B (174 aa).

The first 29 residues, 1 to 29 (MKKSIFSKKLLVSFGSLVALASIPLIAIS), serve as a signal peptide directing secretion. Residue C30 is the site of N-palmitoyl cysteine attachment. C30 carries S-diacylglycerol cysteine lipidation. Positions 32–174 (QTNTDKSQQP…SQDSGNGSTK (143 aa)) are disordered. The segment covering 38–49 (SQQPGSGSSTSG) has biased composition (low complexity). Residues 50–75 (GQSGTGLGSGTTTGGQSGTTTGGRSG) show a composition bias toward gly residues. Residues 76 to 97 (SGSSSSTTGGQTGTGSDSQDSG) show a composition bias toward low complexity. 7 tandem repeats follow at residues 88–99 (GTGSDSQDSGAK), 100–111 (GTGSDSQDSGAK), 112–123 (GTGSDSQDSGAK), 124–135 (GTGSDSQDSGAK), 136–147 (GTGSDSQDSGAK), 148–159 (GTGSDSQDSGAK), and 160–171 (GTGSDSQDSGNG). The 7 X 12 AA tandem repeats stretch occupies residues 88 to 171 (GTGSDSQDSG…GSDSQDSGNG (84 aa)). A compositionally biased stretch (polar residues) spans 102–174 (GSDSQDSGAK…SQDSGNGSTK (73 aa)).

It localises to the cell membrane. Responsible for the antigenic diversity for host adaptation. This Mesomycoplasma hyorhinis (Mycoplasma hyorhinis) protein is Variant surface antigen B (vlpB).